A 176-amino-acid chain; its full sequence is Nucleoside triphosphate/diphosphate phosphatase (176 aa).

Residue arginine 23 is the Proton donor of the active site. Mg(2+) contacts are provided by asparagine 87, aspartate 103, aspartate 105, aspartate 107, aspartate 120, and glutamate 123.

It belongs to the Ntdp family. It depends on Mg(2+) as a cofactor.

The enzyme catalyses a ribonucleoside 5'-triphosphate + H2O = a ribonucleoside 5'-diphosphate + phosphate + H(+). The catalysed reaction is a ribonucleoside 5'-diphosphate + H2O = a ribonucleoside 5'-phosphate + phosphate + H(+). In terms of biological role, has nucleoside phosphatase activity towards nucleoside triphosphates and nucleoside diphosphates. This is Nucleoside triphosphate/diphosphate phosphatase from Bacillus cereus (strain G9842).